Reading from the N-terminus, the 275-residue chain is Nitrogenase iron protein 2 (275 aa).

9 to 16 (GKGGIGKS) lines the ATP pocket. Cysteine 97 contacts [4Fe-4S] cluster. An ADP-ribosylarginine; by dinitrogenase reductase ADP-ribosyltransferase modification is found at arginine 100. Cysteine 132 contacts [4Fe-4S] cluster.

The protein belongs to the NifH/BchL/ChlL family. In terms of assembly, homodimer. Requires [4Fe-4S] cluster as cofactor. In terms of processing, the reversible ADP-ribosylation of Arg-100 inactivates the nitrogenase reductase and regulates nitrogenase activity.

It carries out the reaction N2 + 8 reduced [2Fe-2S]-[ferredoxin] + 16 ATP + 16 H2O = H2 + 8 oxidized [2Fe-2S]-[ferredoxin] + 2 NH4(+) + 16 ADP + 16 phosphate + 6 H(+). The key enzymatic reactions in nitrogen fixation are catalyzed by the nitrogenase complex, which has 2 components: the iron protein (component 2) and a component 1 which is either a molybdenum-iron protein, a vanadium-iron, or an iron-iron protein. The sequence is that of Nitrogenase iron protein 2 (anfH) from Rhodobacter capsulatus (Rhodopseudomonas capsulata).